The chain runs to 95 residues: Aspartyl/glutamyl-tRNA(Asn/Gln) amidotransferase subunit C (95 aa).

It belongs to the GatC family. As to quaternary structure, heterotrimer of A, B and C subunits.

It carries out the reaction L-glutamyl-tRNA(Gln) + L-glutamine + ATP + H2O = L-glutaminyl-tRNA(Gln) + L-glutamate + ADP + phosphate + H(+). It catalyses the reaction L-aspartyl-tRNA(Asn) + L-glutamine + ATP + H2O = L-asparaginyl-tRNA(Asn) + L-glutamate + ADP + phosphate + 2 H(+). In terms of biological role, allows the formation of correctly charged Asn-tRNA(Asn) or Gln-tRNA(Gln) through the transamidation of misacylated Asp-tRNA(Asn) or Glu-tRNA(Gln) in organisms which lack either or both of asparaginyl-tRNA or glutaminyl-tRNA synthetases. The reaction takes place in the presence of glutamine and ATP through an activated phospho-Asp-tRNA(Asn) or phospho-Glu-tRNA(Gln). This is Aspartyl/glutamyl-tRNA(Asn/Gln) amidotransferase subunit C from Campylobacter curvus (strain 525.92).